The following is a 176-amino-acid chain: Small ribosomal subunit protein uS5 (176 aa).

In terms of domain architecture, S5 DRBM spans 11–74 (LSEVLVDVNR…QAAKKRMMKV (64 aa)).

It belongs to the universal ribosomal protein uS5 family. In terms of assembly, part of the 30S ribosomal subunit. Contacts proteins S4 and S8.

In terms of biological role, with S4 and S12 plays an important role in translational accuracy. Located at the back of the 30S subunit body where it stabilizes the conformation of the head with respect to the body. The sequence is that of Small ribosomal subunit protein uS5 from Rickettsia africae (strain ESF-5).